The primary structure comprises 171 residues: Shikimate kinase (171 aa).

14–19 (GAGKST) is an ATP binding site. Residue Ser-18 coordinates Mg(2+). Substrate is bound by residues Asp-36, Arg-60, and Gly-82. ATP is bound at residue Arg-120. Substrate is bound at residue Arg-139. Position 156 (Gln-156) interacts with ATP.

Belongs to the shikimate kinase family. Monomer. Mg(2+) is required as a cofactor.

The protein localises to the cytoplasm. The catalysed reaction is shikimate + ATP = 3-phosphoshikimate + ADP + H(+). Its pathway is metabolic intermediate biosynthesis; chorismate biosynthesis; chorismate from D-erythrose 4-phosphate and phosphoenolpyruvate: step 5/7. Functionally, catalyzes the specific phosphorylation of the 3-hydroxyl group of shikimic acid using ATP as a cosubstrate. The polypeptide is Shikimate kinase (Shewanella frigidimarina (strain NCIMB 400)).